Reading from the N-terminus, the 147-residue chain is Lectin-like protein BA14k (147 aa).

Positions 1–26 are cleaved as a signal peptide; the sequence is MNSFRKTCAGALALIFGATSIVPTVA. The helical transmembrane segment at 80–100 threads the bilayer; the sequence is GWWYPLAAFGAGAIIGGAISQ.

It belongs to the BA14k family.

Its subcellular location is the cell membrane. Functionally, has immunoglobulin-binding and hemagglutination properties, and can bind to mannose. Essential for virulence. May be involved in LPS biosynthesis or polysaccharide transport. In Brucella abortus (strain S19), this protein is Lectin-like protein BA14k.